The following is a 249-amino-acid chain: Transmembrane protein 150C (249 aa).

Over 1–9 (MDGKKCSVW) the chain is Cytoplasmic. The helical transmembrane segment at 10-30 (MFLPLVFTLFTSAGLWIVYFI) threads the bilayer. The Extracellular portion of the chain corresponds to 31 to 64 (AVEDDKILPLNSAERKPGVKHAPYISIAGDDPPA). The helical transmembrane segment at 65–85 (SCVFSQVMNMAAFLALVVAVL) threads the bilayer. At 86–97 (RFIQLKPKVLNP) the chain is on the cytoplasmic side. Residues 98-118 (WLNISGLVALCLASFGMTLLG) form a helical membrane-spanning segment. The Extracellular portion of the chain corresponds to 119-130 (NFQLTNDEEIHN). Residues 131–151 (VGTSLTFGFGTLTCWIQAALT) traverse the membrane as a helical segment. The Cytoplasmic portion of the chain corresponds to 152 to 168 (LKVNIKNEGRRVGIPRV). Residues 169-189 (ILSASITLCVVLYFILMAQSI) traverse the membrane as a helical segment. Residues 190 to 192 (HMY) are Extracellular-facing. Residues 193-213 (AARVQWGLVMCFLSYFGTFAV) traverse the membrane as a helical segment. The Cytoplasmic portion of the chain corresponds to 214–249 (EFRHYRYEIVCSEYQENFLSFSESLSEASEYQTDQV).

This sequence belongs to the DRAM/TMEM150 family.

It is found in the cell membrane. The protein localises to the lysosome membrane. The catalysed reaction is Ca(2+)(in) = Ca(2+)(out). It carries out the reaction Na(+)(in) = Na(+)(out). The enzyme catalyses K(+)(in) = K(+)(out). It catalyses the reaction Mg(2+)(in) = Mg(2+)(out). Functionally, nonselective cationic channel with high permeability to Ca(2+). Component of a mechanosensitive cation channel, confers mechanically activated (MA) currents with slow inactivation kinetics. May contribute to proprioception. This chain is Transmembrane protein 150C, found in Homo sapiens (Human).